A 260-amino-acid polypeptide reads, in one-letter code: Pyridoxine 5'-phosphate synthase (260 aa).

Asn15 is a binding site for 3-amino-2-oxopropyl phosphate. 1-deoxy-D-xylulose 5-phosphate is bound at residue 17–18 (DH). Arg26 is a binding site for 3-amino-2-oxopropyl phosphate. His51 acts as the Proton acceptor in catalysis. Arg53 and His58 together coordinate 1-deoxy-D-xylulose 5-phosphate. The Proton acceptor role is filled by Glu78. A 1-deoxy-D-xylulose 5-phosphate-binding site is contributed by Thr108. The active-site Proton donor is His199. Residues Gly200 and 221–222 (GH) contribute to the 3-amino-2-oxopropyl phosphate site.

Belongs to the PNP synthase family. In terms of assembly, homooctamer; tetramer of dimers.

It localises to the cytoplasm. The enzyme catalyses 3-amino-2-oxopropyl phosphate + 1-deoxy-D-xylulose 5-phosphate = pyridoxine 5'-phosphate + phosphate + 2 H2O + H(+). It functions in the pathway cofactor biosynthesis; pyridoxine 5'-phosphate biosynthesis; pyridoxine 5'-phosphate from D-erythrose 4-phosphate: step 5/5. Its function is as follows. Catalyzes the complicated ring closure reaction between the two acyclic compounds 1-deoxy-D-xylulose-5-phosphate (DXP) and 3-amino-2-oxopropyl phosphate (1-amino-acetone-3-phosphate or AAP) to form pyridoxine 5'-phosphate (PNP) and inorganic phosphate. The protein is Pyridoxine 5'-phosphate synthase of Cupriavidus taiwanensis (strain DSM 17343 / BCRC 17206 / CCUG 44338 / CIP 107171 / LMG 19424 / R1) (Ralstonia taiwanensis (strain LMG 19424)).